A 521-amino-acid chain; its full sequence is Acetylcholine receptor subunit delta (521 aa).

The signal sequence occupies residues 1 to 21 (MAWIWISLLLPILIYFPGCFS). Residues 22–247 (ESEEERLLNH…ITFYLIIERK (226 aa)) lie on the Extracellular side of the membrane. 2 N-linked (GlcNAc...) asparagine glycosylation sites follow: N53 and N164. An intrachain disulfide couples C151 to C165. 3 helical membrane passes run 248–272 (PLFY…VFYL), 280–297 (MTLA…LLLI), and 314–335 (YLMF…VLNL). The Cytoplasmic portion of the chain corresponds to 336 to 475 (HFRTPSTHAI…WYRIARTVDR (140 aa)). Y394 carries the phosphotyrosine; by Tyr-kinases modification. The chain crosses the membrane as a helical span at residues 476-494 (LCLFLVTPVMIIGTLWIFL).

It belongs to the ligand-gated ion channel (TC 1.A.9) family. Acetylcholine receptor (TC 1.A.9.1) subfamily. In terms of assembly, pentamer of two alpha chains, and one each of the beta, delta, and gamma (in immature muscle) or epsilon (in mature muscle) chains.

The protein localises to the postsynaptic cell membrane. It is found in the cell membrane. It carries out the reaction K(+)(in) = K(+)(out). The catalysed reaction is Na(+)(in) = Na(+)(out). Functionally, after binding acetylcholine, the AChR responds by an extensive change in conformation that affects all subunits and leads to opening of an ion-conducting channel across the plasma membrane. The polypeptide is Acetylcholine receptor subunit delta (chrnd) (Xenopus laevis (African clawed frog)).